The sequence spans 1056 residues: PH and SEC7 domain-containing protein 4 (1056 aa).

The segment covering L25 to P42 has biased composition (basic and acidic residues). Disordered regions lie at residues L25 to E71, C87 to S149, L195 to A239, G340 to A362, V388 to Q533, and L546 to G581. 2 stretches are compositionally biased toward polar residues: residues Q88–S99 and N128–N137. 3 positions are modified to phosphoserine: S131, S134, and S143. A compositionally biased stretch (acidic residues) spans E207 to G220. Residue S413 is modified to Phosphoserine. Over residues Q414–H423 the composition is skewed to basic and acidic residues. The segment covering R438 to P456 has biased composition (low complexity). Phosphoserine occurs at positions 448, 469, and 491. Composition is skewed to polar residues over residues Q466–S476 and D486–S502. The segment covering K504–G522 has biased composition (basic and acidic residues). Residues E544 to E736 enclose the SEC7 domain. The segment covering T548–E567 has biased composition (polar residues). The PH domain maps to P776 to A892. Residues S921–E976 are a coiled coil. The tract at residues A1004 to L1056 is disordered. S1019 and S1022 each carry phosphoserine. Residues T1043–L1056 show a composition bias toward basic residues.

Widely expressed. Highest levels of expression are found in placenta, pancreas, spleen, thymus and peripheral blood.

The protein localises to the cell membrane. Its subcellular location is the cell projection. It is found in the ruffle membrane. Its function is as follows. Guanine nucleotide exchange factor for ARF6 and ARL14/ARF7. Through ARL14 activation, controls the movement of MHC class II-containing vesicles along the actin cytoskeleton in dendritic cells. Involved in membrane recycling. Interacts with several phosphatidylinositol phosphate species, including phosphatidylinositol 3,4-bisphosphate, phosphatidylinositol 3,5-bisphosphate and phosphatidylinositol 4,5-bisphosphate. The protein is PH and SEC7 domain-containing protein 4 (PSD4) of Homo sapiens (Human).